The primary structure comprises 685 residues: Transforming growth factor beta activator LRRC33 (685 aa).

The N-terminal stretch at 1 to 27 (MPVCGCLSVVLSHAVVLLMLVLHSASG) is a signal peptide. Over 28-640 (HPQTFPCRLI…CGFTNNNKES (613 aa)) the chain is Extracellular. The LRRNT domain occupies 29 to 56 (PQTFPCRLIQRVALCSGRQLSVIPDCLP). 7 LRR repeats span residues 57-79 (HETE…LSRY), 80-102 (PFLR…AFIE), 103-129 (SHLL…AFRS), 130-154 (LTQL…LVAN), 155-178 (LSSL…TFRD), 180-201 (HQLK…AFDH), and 202-225 (MKKL…EMTQ). N-linked (GlcNAc...) asparagine glycosylation is present at N154. N-linked (GlcNAc...) asparagine glycosylation is found at N230 and N244. 2 LRR repeats span residues 248–271 (TFQL…PTNN) and 273–296 (IRTL…TSSN). N291, N296, N309, N312, and N325 each carry an N-linked (GlcNAc...) asparagine glycan. 11 LRR repeats span residues 326 to 349 (LSSV…FIKQ), 351 to 373 (PQLY…SEDL), 374 to 397 (PVTI…QTSK), 400 to 423 (LNNL…IFTS), 425 to 447 (PNLN…NYMG), 457 to 480 (MASL…AFKG), 482 to 503 (SLTH…SLKG), 505 to 526 (ANTL…FSPY), 527 to 549 (TNLK…LMAL), 551 to 571 (LKLL…HASL), and 573 to 596 (AKKL…WFRT). N-linked (GlcNAc...) asparagine glycans are attached at residues N402 and N407. N533 carries N-linked (GlcNAc...) asparagine glycosylation. In terms of domain architecture, LRRCT spans 597 to 635 (FGENKGIHVADLSEITCLDLNYRRHKVVLTDAVYCGFTN). Residues 641–661 (VVWYILLFVTVSVSIMGISVI) form a helical membrane-spanning segment. The Cytoplasmic segment spans residues 662 to 685 (YMLTFKPRMLPRVIKKKCWRPTSY).

This sequence belongs to the LRRC32/LRRC33 family.

The protein localises to the cell membrane. It is found in the endoplasmic reticulum membrane. In terms of biological role, key regulator of transforming growth factor beta-1 (TGFB1) specifically required for microglia function in the nervous system. Required for activation of latent TGF-beta-1 in macrophages and microglia: associates specifically via disulfide bonds with the Latency-associated peptide (LAP), which is the regulatory chain of TGFB1, and regulates integrin-dependent activation of TGF-beta-1. TGF-beta-1 activation mediated by lrrc33/nrros is highly localized: there is little spreading of TGF-beta-1 activated from one microglial cell to neighboring microglia, suggesting the existence of localized and selective activation of TGF-beta-1 by lrrc33/nrros. This is Transforming growth factor beta activator LRRC33 from Danio rerio (Zebrafish).